We begin with the raw amino-acid sequence, 311 residues long: ATP synthase gamma chain (311 aa).

An intrachain disulfide couples cysteine 67 to cysteine 138.

Belongs to the ATPase gamma chain family. F-type ATPases have 2 components, CF(1) - the catalytic core - and CF(0) - the membrane proton channel. CF(1) has five subunits: alpha(3), beta(3), gamma(1), delta(1), epsilon(1). CF(0) has three main subunits: a, b and c.

Its subcellular location is the cellular thylakoid membrane. Thiol-modulation by raising the activation threshold of the enzyme upon oxidation of the cysteines, thereby preventing wasteful ATP-hydrolysis. Functionally, produces ATP from ADP in the presence of a proton gradient across the membrane. The gamma chain is believed to be important in regulating ATPase activity and the flow of protons through the CF(0) complex. The polypeptide is ATP synthase gamma chain (atpG) (Arthrospira platensis (Spirulina platensis)).